A 149-amino-acid chain; its full sequence is MELILLQKVANLGALGDKVTVKPGYGRNFLLPKGVAVPATEANLAAFQAKRAEYEAKAKSELDQAQARAAKFEGASVTVSAHASTEGKLYGSVGARDIAEAFTAVGLPLEKKEVILGEGPFRLIGEYDVLLHLHADVESTVKVIVQGVP.

This sequence belongs to the bacterial ribosomal protein bL9 family.

Functionally, binds to the 23S rRNA. The chain is Large ribosomal subunit protein bL9 from Xylella fastidiosa (strain 9a5c).